The chain runs to 260 residues: Carbonic anhydrase (260 aa).

The disordered stretch occupies residues 1–31 (MAHAWGYGPADGPESWAESFPIANGPRQSPI). In terms of domain architecture, Alpha-carbonic anhydrase spans 3-259 (HAWGYGPADG…LKGRKVRASF (257 aa)). Histidine 64 (proton acceptor) is an active-site residue. Zn(2+) contacts are provided by histidine 94, histidine 96, and histidine 119. The active site involves tyrosine 127. 198-199 (TT) lines the substrate pocket.

The protein belongs to the alpha-carbonic anhydrase family. Zn(2+) is required as a cofactor.

The catalysed reaction is hydrogencarbonate + H(+) = CO2 + H2O. Its function is as follows. Reversible hydration of carbon dioxide. This chain is Carbonic anhydrase (cahz), found in Danio rerio (Zebrafish).